The following is a 336-amino-acid chain: Aspartate--ammonia ligase (336 aa).

The protein belongs to the class-II aminoacyl-tRNA synthetase family. AsnA subfamily.

It is found in the cytoplasm. The catalysed reaction is L-aspartate + NH4(+) + ATP = L-asparagine + AMP + diphosphate + H(+). Its pathway is amino-acid biosynthesis; L-asparagine biosynthesis; L-asparagine from L-aspartate (ammonia route): step 1/1. This chain is Aspartate--ammonia ligase, found in Clostridium perfringens (strain ATCC 13124 / DSM 756 / JCM 1290 / NCIMB 6125 / NCTC 8237 / Type A).